A 237-amino-acid polypeptide reads, in one-letter code: CDP-diacylglycerol--serine O-phosphatidyltransferase (237 aa).

8 consecutive transmembrane segments (helical) span residues 3–23 (INPL…LGMM), 25–45 (IFYA…ASLI), 73–93 (VVAF…YNFG), 95–115 (IGMA…ARFN), 124–144 (YSFI…CVLL), 150–170 (FLEG…GVLM), 184–204 (WNLK…VRPL), and 207–227 (LSVF…FLMV).

It belongs to the CDP-alcohol phosphatidyltransferase class-I family.

It is found in the cell membrane. It catalyses the reaction a CDP-1,2-diacyl-sn-glycerol + L-serine = a 1,2-diacyl-sn-glycero-3-phospho-L-serine + CMP + H(+). In Helicobacter pylori (strain J99 / ATCC 700824) (Campylobacter pylori J99), this protein is CDP-diacylglycerol--serine O-phosphatidyltransferase (pssA).